A 145-amino-acid polypeptide reads, in one-letter code: 3-hydroxyacyl-[acyl-carrier-protein] dehydratase FabZ (145 aa).

The active site involves His-49.

This sequence belongs to the thioester dehydratase family. FabZ subfamily.

It is found in the cytoplasm. The catalysed reaction is a (3R)-hydroxyacyl-[ACP] = a (2E)-enoyl-[ACP] + H2O. Involved in unsaturated fatty acids biosynthesis. Catalyzes the dehydration of short chain beta-hydroxyacyl-ACPs and long chain saturated and unsaturated beta-hydroxyacyl-ACPs. The sequence is that of 3-hydroxyacyl-[acyl-carrier-protein] dehydratase FabZ from Rickettsia africae (strain ESF-5).